The primary structure comprises 144 residues: Large ribosomal subunit protein uL15 (144 aa).

The segment at 1 to 48 is disordered; the sequence is MQLNNLKPAAGSKHAKRRVGRGIGSGLGKTAGRGHKGQKSRSGGFHKV. Residues 21 to 31 show a composition bias toward gly residues; it reads RGIGSGLGKTA.

This sequence belongs to the universal ribosomal protein uL15 family. As to quaternary structure, part of the 50S ribosomal subunit.

Its function is as follows. Binds to the 23S rRNA. The polypeptide is Large ribosomal subunit protein uL15 (Cupriavidus pinatubonensis (strain JMP 134 / LMG 1197) (Cupriavidus necator (strain JMP 134))).